Reading from the N-terminus, the 454-residue chain is Ribosomal protein uS12 methylthiotransferase RimO (454 aa).

One can recognise an MTTase N-terminal domain in the interval 14–125; it reads SKIAFSHVGC…IAKVLDRVEK (112 aa). 6 residues coordinate [4Fe-4S] cluster: Cys-23, Cys-59, Cys-88, Cys-163, Cys-167, and Cys-170. One can recognise a Radical SAM core domain in the interval 149 to 378; it reads DKNKFVAYLR…ISVQQNISRE (230 aa). The 72-residue stretch at 381–452 folds into the TRAM domain; the sequence is QIYVGSKMKI…EYDLYGETIK (72 aa).

It belongs to the methylthiotransferase family. RimO subfamily. The cofactor is [4Fe-4S] cluster.

It localises to the cytoplasm. It carries out the reaction L-aspartate(89)-[ribosomal protein uS12]-hydrogen + (sulfur carrier)-SH + AH2 + 2 S-adenosyl-L-methionine = 3-methylsulfanyl-L-aspartate(89)-[ribosomal protein uS12]-hydrogen + (sulfur carrier)-H + 5'-deoxyadenosine + L-methionine + A + S-adenosyl-L-homocysteine + 2 H(+). In terms of biological role, catalyzes the methylthiolation of an aspartic acid residue of ribosomal protein uS12. The sequence is that of Ribosomal protein uS12 methylthiotransferase RimO from Prochlorococcus marinus (strain MIT 9301).